The chain runs to 340 residues: MIILAIESSCDETGVGIAELGDDGSVTLLADEVASSVDEHARFGGVVPEIASRAHLEALGPTMRRALATAGVDKPDVVAATIGPGLAGALLVGVAAAKAYAAAWQVPFYAVNHLGGHLAADVFDHGPLPESIGLLVSGGHTHLLHVRSLGEPIIELGSTVDDAAGEAYDKIARLLGLGYPGGRVLDELAREGDPKAITFPRGMTGPRDEPYAFSFSGLKTAVARYVESHPEASQADVAAGFQEAVADVLTAKAVRAAGDLGVSTLLIAGGVAANSRLRELAAQRCEAAGMTLRIPRPRLCTDNGAMIASFAAHLIAAGAAPSPLDAASDPGLPVVQGQVA.

Histidine 113 and histidine 117 together coordinate Fe cation. Residues 135–139 (LVSGG), aspartate 169, glycine 182, aspartate 186, and asparagine 274 contribute to the substrate site. Aspartate 302 is a Fe cation binding site.

Belongs to the KAE1 / TsaD family. It depends on Fe(2+) as a cofactor.

The protein resides in the cytoplasm. It catalyses the reaction L-threonylcarbamoyladenylate + adenosine(37) in tRNA = N(6)-L-threonylcarbamoyladenosine(37) in tRNA + AMP + H(+). Its function is as follows. Required for the formation of a threonylcarbamoyl group on adenosine at position 37 (t(6)A37) in tRNAs that read codons beginning with adenine. Is involved in the transfer of the threonylcarbamoyl moiety of threonylcarbamoyl-AMP (TC-AMP) to the N6 group of A37, together with TsaE and TsaB. TsaD likely plays a direct catalytic role in this reaction. The protein is tRNA N6-adenosine threonylcarbamoyltransferase of Mycolicibacterium gilvum (strain PYR-GCK) (Mycobacterium gilvum (strain PYR-GCK)).